Reading from the N-terminus, the 282-residue chain is Nucleotide-binding protein Shew_3314 (282 aa).

Position 8 to 15 (8 to 15 (GRSGSGKS)) interacts with ATP. Residue 56–59 (DVRN) coordinates GTP.

The protein belongs to the RapZ-like family.

Its function is as follows. Displays ATPase and GTPase activities. The protein is Nucleotide-binding protein Shew_3314 of Shewanella loihica (strain ATCC BAA-1088 / PV-4).